Consider the following 234-residue polypeptide: LexA repressor (234 aa).

Residues 26-46 (FEEMKEALDLKSKSGVHRLIS) constitute a DNA-binding region (H-T-H motif). Residues 73-100 (AVGKAAPVSQREAANTNSALPPLRAAPK) are disordered. The span at 91–100 (ALPPLRAAPK) shows a compositional bias: low complexity. Residues serine 154 and lysine 192 each act as for autocatalytic cleavage activity in the active site.

The protein belongs to the peptidase S24 family. As to quaternary structure, homodimer.

The enzyme catalyses Hydrolysis of Ala-|-Gly bond in repressor LexA.. Functionally, represses a number of genes involved in the response to DNA damage (SOS response), including recA and lexA. In the presence of single-stranded DNA, RecA interacts with LexA causing an autocatalytic cleavage which disrupts the DNA-binding part of LexA, leading to derepression of the SOS regulon and eventually DNA repair. This is LexA repressor from Novosphingobium aromaticivorans (strain ATCC 700278 / DSM 12444 / CCUG 56034 / CIP 105152 / NBRC 16084 / F199).